The sequence spans 338 residues: MNTEASQDQTVPETTGVRLRQAREALGLTQQMVAERLCLKVSTIRDIEEDKAQANLASTFHRGYIRSYAKLVHLPEDELLPMLAKQAPIRAAKVAPMQSFSLGKKHKKRDGWLMSFTWLIVLVVLGLTGAWWWQNHQAQQAEIVTMADQSSAQLSQNGGQSVPLSDDNSDPANPVDTQAPVANSQPSTPTENGTVPATSSAAPADTANNGVNTTAPQGTTSAESAVVSPSQAPLPSVSTAQPPLPTADAGVTGTASSADSLVMNFTADCWLQVVDASGKTLFSGIQKGGATLNLSGKAPYKLTIGAPGALTITYQGNPVDLSKFIKANRVARLTVGVE.

Residues 1-111 (MNTEASQDQT…LGKKHKKRDG (111 aa)) lie on the Cytoplasmic side of the membrane. The 61-residue stretch at 19-79 (LRQAREALGL…KLVHLPEDEL (61 aa)) folds into the HTH cro/C1-type domain. Positions 30-49 (QQMVAERLCLKVSTIRDIEE) form a DNA-binding region, H-T-H motif. Residues 112-132 (WLMSFTWLIVLVVLGLTGAWW) form a helical; Signal-anchor for type II membrane protein membrane-spanning segment. Residues 133–338 (WQNHQAQQAE…RVARLTVGVE (206 aa)) are Periplasmic-facing. Composition is skewed to polar residues over residues 151–163 (SAQL…QSVP) and 180–195 (PVAN…NGTV). The segment at 151-253 (SAQLSQNGGQ…LPTADAGVTG (103 aa)) is disordered. The span at 196 to 209 (PATSSAAPADTANN) shows a compositional bias: low complexity. The segment covering 210–241 (GVNTTAPQGTTSAESAVVSPSQAPLPSVSTAQ) has biased composition (polar residues).

The protein belongs to the RodZ family.

The protein resides in the cell inner membrane. Cytoskeletal protein that is involved in cell-shape control through regulation of the length of the long axis. This Yersinia enterocolitica serotype O:8 / biotype 1B (strain NCTC 13174 / 8081) protein is Cytoskeleton protein RodZ.